The chain runs to 514 residues: Phospholipase C D (514 aa).

Positions 1–37 (MSQSHIGGVSRREFLAKVAAGGAGALMSFAGPVIEKA) form a signal peptide, tat-type signal. The disordered stretch occupies residues 492–514 (VPDPQIMPTQETTPTRGIPSGPC).

This sequence belongs to the bacterial phospholipase C family. Post-translationally, predicted to be exported by the Tat system. The position of the signal peptide cleavage has not been experimentally proven.

It localises to the secreted. Its subcellular location is the cell wall. The catalysed reaction is a 1,2-diacyl-sn-glycero-3-phosphocholine + H2O = phosphocholine + a 1,2-diacyl-sn-glycerol + H(+). Functionally, involved in virulence. Induces cytotoxic effects on mouse macrophage cell lines, via direct or indirect enzymatic hydrolysis of cell membrane phospholipids. Hydrolyzes phosphatidylcholine. In Mycobacterium tuberculosis (strain CDC 1551 / Oshkosh), this protein is Phospholipase C D.